Consider the following 426-residue polypeptide: MKFTLLGFGLSNKEIFKYLVKNGHEVFVSEGKKLASSDKKLLLENGVQFEENGHTEKALECDIILVSPGVHFENEIIKEAKRRSIEIDTEISFCQREFEKIGWTPFVIAVTGSVGKSTTVSLIYHLLNKKVRALLAGNIGIPIAKLLNDNLRANYLVLEISSFQLFWSKRFKPNISSILNIYPNHLNWHPDMEHYVSSKFKIASFQSKDDVFVYNPNDEYIRKNLYKVSAKKVPFRFDFSIEKLPIHLRYRQTVENVAAAKTILETMGYEFKWEFLEDFEKLPHRMEYVTEINGVKFFNDSKATNAIAVIRAIENFDDKLHLIMAGIGKNEDYTLLAKIIKEKVKILALVGPIADEIEPYLDGVRYFKVDTINQAVNQLFSMASRGDVIMLSPGGASFDAFKNFEERGEYFKQLVMQLKEGNCEEC.

Residue 112 to 118 participates in ATP binding; the sequence is GSVGKST.

It belongs to the MurCDEF family.

It is found in the cytoplasm. The catalysed reaction is UDP-N-acetyl-alpha-D-muramoyl-L-alanine + D-glutamate + ATP = UDP-N-acetyl-alpha-D-muramoyl-L-alanyl-D-glutamate + ADP + phosphate + H(+). The protein operates within cell wall biogenesis; peptidoglycan biosynthesis. In terms of biological role, cell wall formation. Catalyzes the addition of glutamate to the nucleotide precursor UDP-N-acetylmuramoyl-L-alanine (UMA). This chain is UDP-N-acetylmuramoylalanine--D-glutamate ligase, found in Thermosipho melanesiensis (strain DSM 12029 / CIP 104789 / BI429).